The sequence spans 354 residues: tRNA N6-adenosine threonylcarbamoyltransferase (354 aa).

Positions 111 and 115 each coordinate Fe cation. Substrate contacts are provided by residues leucine 134–glycine 138, aspartate 167, glycine 180, and asparagine 279. Fe cation is bound at residue aspartate 319.

This sequence belongs to the KAE1 / TsaD family. Fe(2+) is required as a cofactor.

Its subcellular location is the cytoplasm. The enzyme catalyses L-threonylcarbamoyladenylate + adenosine(37) in tRNA = N(6)-L-threonylcarbamoyladenosine(37) in tRNA + AMP + H(+). Its function is as follows. Required for the formation of a threonylcarbamoyl group on adenosine at position 37 (t(6)A37) in tRNAs that read codons beginning with adenine. Is involved in the transfer of the threonylcarbamoyl moiety of threonylcarbamoyl-AMP (TC-AMP) to the N6 group of A37, together with TsaE and TsaB. TsaD likely plays a direct catalytic role in this reaction. This chain is tRNA N6-adenosine threonylcarbamoyltransferase, found in Neisseria meningitidis serogroup A / serotype 4A (strain DSM 15465 / Z2491).